Here is a 271-residue protein sequence, read N- to C-terminus: Calretinin (271 aa).

6 EF-hand domains span residues 16–51 (LTAT…LEKA), 63–98 (NLGE…EENF), 107–142 (GSST…LLKK), 151–186 (KLQE…QENF), 195–230 (LTSE…LYEK), and 235–270 (MNIQ…SEPP). Residues D29, D31, N33, Y35, E40, D76, N78, D80, K82, E87, D120, D122, S124, Y126, E131, D164, N166, D168, K170, E175, D208, D210, S212, Y214, and E219 each coordinate Ca(2+). A Phosphotyrosine modification is found at Y214.

Belongs to the calbindin family.

It is found in the synapse. The protein localises to the cell projection. Its subcellular location is the dendrite. Calcium-binding protein involved in calcium homeostasis and signal transduction. It plays a critical role in buffering intracellular calcium levels and modulating calcium-dependent signaling pathways. Predominantly expressed in specific neuronal populations, influences synaptic plasticity and neuronal excitability, contributing to learning and memory. During embryonic development, it facilitates neuronal differentiation and maturation. The polypeptide is Calretinin (CALB2) (Bos taurus (Bovine)).